The following is a 477-amino-acid chain: Aspartyl/glutamyl-tRNA(Asn/Gln) amidotransferase subunit B (477 aa).

This sequence belongs to the GatB/GatE family. GatB subfamily. In terms of assembly, heterotrimer of A, B and C subunits.

The catalysed reaction is L-glutamyl-tRNA(Gln) + L-glutamine + ATP + H2O = L-glutaminyl-tRNA(Gln) + L-glutamate + ADP + phosphate + H(+). It carries out the reaction L-aspartyl-tRNA(Asn) + L-glutamine + ATP + H2O = L-asparaginyl-tRNA(Asn) + L-glutamate + ADP + phosphate + 2 H(+). Functionally, allows the formation of correctly charged Asn-tRNA(Asn) or Gln-tRNA(Gln) through the transamidation of misacylated Asp-tRNA(Asn) or Glu-tRNA(Gln) in organisms which lack either or both of asparaginyl-tRNA or glutaminyl-tRNA synthetases. The reaction takes place in the presence of glutamine and ATP through an activated phospho-Asp-tRNA(Asn) or phospho-Glu-tRNA(Gln). The polypeptide is Aspartyl/glutamyl-tRNA(Asn/Gln) amidotransferase subunit B (Legionella pneumophila (strain Paris)).